The sequence spans 242 residues: MKTFHGPTCGTAVSLCLLLFLTSALEEGEITSKVKFPPSSSPSFPRLVMVGTLPDLQEITLCYWFKVNRLKGTLHMFSYATAKKDNELLTLIDEQGDFLFNVHGAPQLKVQCPNKIHIGKWHHVCHTWSSWEGEATIAVDGFHCKGNATGIAVGRTLSQGGLVVLGQDQDSVGGKFDATQSLEGELSELNLWNTVLNHEQIKYLSKCAHPSERHIYGNIIQWDKTQFKAYDGVVLSPNEICA.

The signal sequence occupies residues 1–24 (MKTFHGPTCGTAVSLCLLLFLTSA). A Pentraxin (PTX) domain is found at 30–241 (ITSKVKFPPS…GVVLSPNEIC (212 aa)). Positions 60 and 63 each coordinate phosphocholine. Cystine bridges form between cysteine 62/cysteine 125 and cysteine 112/cysteine 144. The Ca(2+) site is built by aspartate 85 and asparagine 86. An N-linked (GlcNAc...) asparagine glycan is attached at asparagine 147. Ca(2+) contacts are provided by glutamine 169, aspartate 170, and glutamine 180. Residues cysteine 207 and cysteine 241 are joined by a disulfide bond.

This sequence belongs to the pentraxin family. Homopentamer. Pentraxin (or pentaxin) have a discoid arrangement of 5 non-covalently bound subunits. Ca(2+) serves as cofactor.

The protein localises to the secreted. Might serve the role of immunoglobulins. This chain is C-reactive protein 1.1, found in Limulus polyphemus (Atlantic horseshoe crab).